Here is a 427-residue protein sequence, read N- to C-terminus: Trigger factor (427 aa).

In terms of domain architecture, PPIase FKBP-type spans 163–248 (GDTVVIDFVG…VHEVKSKEVP (86 aa)).

This sequence belongs to the FKBP-type PPIase family. Tig subfamily.

Its subcellular location is the cytoplasm. The catalysed reaction is [protein]-peptidylproline (omega=180) = [protein]-peptidylproline (omega=0). Involved in protein export. Acts as a chaperone by maintaining the newly synthesized protein in an open conformation. Functions as a peptidyl-prolyl cis-trans isomerase. This Streptococcus uberis (strain ATCC BAA-854 / 0140J) protein is Trigger factor.